The following is a 322-amino-acid chain: MIQHLALDALQRHLAGSPLYAWATSLPAQIAARIEEGHGDLARWWSAVQRLPQVQAPTVELAGRFALHSERDAALQPQVKEALQGLIPWRKGPFDFFGVQVDTEWRSDWKWSRVSPHVDLRGKRILDVGCGNGYYQWRMLGAGAESVIGIDPNWLFLCQFLAAKRYLADLPAWHLPLALEDLPEKLEGFDTLFSMGVLYHRRSPIDHLLALKDCLKRGGELVLETLVVEGDASTVLVPEDRYAQMRNVWFLPSVAALELWLRRAGFADARCVDVSLTSVEEQRATEWMRFQSLPEFLDPQDRSRTVEGLPAPMRATLVARKP.

Carboxy-S-adenosyl-L-methionine contacts are provided by residues K91, W105, K110, G129, 179 to 180 (LE), M195, Y199, and R314.

It belongs to the class I-like SAM-binding methyltransferase superfamily. CmoB family. As to quaternary structure, homotetramer.

The catalysed reaction is carboxy-S-adenosyl-L-methionine + 5-hydroxyuridine(34) in tRNA = 5-carboxymethoxyuridine(34) in tRNA + S-adenosyl-L-homocysteine + H(+). Its function is as follows. Catalyzes carboxymethyl transfer from carboxy-S-adenosyl-L-methionine (Cx-SAM) to 5-hydroxyuridine (ho5U) to form 5-carboxymethoxyuridine (cmo5U) at position 34 in tRNAs. The sequence is that of tRNA U34 carboxymethyltransferase from Pseudomonas paraeruginosa (strain DSM 24068 / PA7) (Pseudomonas aeruginosa (strain PA7)).